Reading from the N-terminus, the 338-residue chain is D-erythrose-4-phosphate dehydrogenase (338 aa).

12–13 contacts NAD(+); sequence RI. Substrate-binding positions include 154-156, R200, 213-214, and R236; these read SCT and TK. The Nucleophile role is filled by C155. Residue N318 coordinates NAD(+).

It belongs to the glyceraldehyde-3-phosphate dehydrogenase family. Epd subfamily. In terms of assembly, homotetramer.

The protein resides in the cytoplasm. It carries out the reaction D-erythrose 4-phosphate + NAD(+) + H2O = 4-phospho-D-erythronate + NADH + 2 H(+). It functions in the pathway cofactor biosynthesis; pyridoxine 5'-phosphate biosynthesis; pyridoxine 5'-phosphate from D-erythrose 4-phosphate: step 1/5. Functionally, catalyzes the NAD-dependent conversion of D-erythrose 4-phosphate to 4-phosphoerythronate. This chain is D-erythrose-4-phosphate dehydrogenase, found in Tolumonas auensis (strain DSM 9187 / NBRC 110442 / TA 4).